The sequence spans 1188 residues: MDLPRGLVVAWALSLWPGFTDTFNMDTRKPRVIPGSRTAFFGYTVQQHDISGNKWLVVGAPLETNGYQKTGDVYKCPVIHGNCTKLNLGRVTLSNVSERKDNMRLGLSLATNPKDNSFLACSPLWSHECGSSYYTTGMCSRVNSNFRFSKTVAPALQRCQTYMDIVIVLDGSNSIYPWVEVQHFLINILKKFYIGPGQIQVGVVQYGEDVVHEFHLNDYRSVKDVVEAASHIEQRGGTETRTAFGIEFARSEAFQKGGRKGAKKVMIVITDGESHDSPDLEKVIQQSERDNVTRYAVAVLGYYNRRGINPETFLNEIKYIASDPDDKHFFNVTDEAALKDIVDALGDRIFSLEGTNKNETSFGLEMSQTGFSSHVVEDGVLLGAVGAYDWNGAVLKETSAGKVIPLRESYLKEFPEELKNHGAYLGYTVTSVVSSRQGRVYVAGAPRFNHTGKVILFTMHNNRSLTIHQAMRGQQIGSYFGSEITSVDIDGDGVTDVLLVGAPMYFNEGRERGKVYVYELRQNLFVYNGTLKDSHSYQNARFGSSIASVRDLNQDSYNDVVVGAPLEDNHAGAIYIFHGFRGSILKTPKQRITASELATGLQYFGCSIHGQLDLNEDGLIDLAVGALGNAVILWSRPVVQINASLHFEPSKINIFHRDCKRSGRDATCLAAFLCFTPIFLAPHFQTTTVGIRYNATMDERRYTPRAHLDEGGDRFTNRAVLLSSGQELCERINFHVLDTADYVKPVTFSVEYSLEDPDHGPMLDDGWPTTLRVSVPFWNGCNEDEHCVPDLVLDARSDLPTAMEYCQRVLRKPAQDCSAYTLSFDTTVFIIESTRQRVAVEATLENRGENAYSTVLNISQSANLQFASLIQKEDSDGSIECVNEERRLQKQVCNVSYPFFRAKAKVAFRLDFEFSKSIFLHHLEIELAAGSDSNERDSTKEDNVAPLRFHLKYEADVLFTRSSSLSHYEVKPNSSLERYDGIGPPFSCIFRIQNLGLFPIHGMMMKITIPIATRSGNRLLKLRDFLTDEANTSCNIWGNSTEYRPTPVEEDLRRAPQLNHSNSDVVSINCNIRLVPNQEINFHLLGNLWLRSLKALKYKSMKIMVNAALQRQFHSPFIFREEDPSRQIVFEISKQEDWQVPIWIIVGSTLGGLLLLALLVLALWKLGFFRSARRRREPGLDPTPKVLE.

Positions 1 to 22 (MDLPRGLVVAWALSLWPGFTDT) are cleaved as a signal peptide. Over 23–1141 (FNMDTRKPRV…ISKQEDWQVP (1119 aa)) the chain is Extracellular. FG-GAP repeat units lie at residues 24–85 (NMDT…NCTK) and 91–151 (VTLS…FSKT). C76 and C83 are disulfide-bonded. N-linked (GlcNAc...) asparagine glycans are attached at residues N82 and N95. 2 disulfides stabilise this stretch: C121-C139 and C129-C159. One can recognise a VWFA domain in the interval 164-345 (DIVIVLDGSN…AALKDIVDAL (182 aa)). Residues N291, N331, N358, N449, and N462 are each glycosylated (N-linked (GlcNAc...) asparagine). 5 FG-GAP repeats span residues 355–406 (TNKN…VIPL), 411–461 (LKEF…TMHN), 462–527 (NRSL…LFVY), 528–586 (NGTL…SILK), and 590–650 (QRIT…FEPS). 4 residues coordinate Ca(2+): D488, D490, D492, and D496. N-linked (GlcNAc...) asparagine glycosylation is present at N528. Ca(2+) is bound by residues D551, N553, D555, D559, D613, N615, D617, and D621. An N-linked (GlcNAc...) asparagine glycan is attached at N642. 3 disulfide bridges follow: C659-C668, C674-C729, and C781-C787. Residue N694 is glycosylated (N-linked (GlcNAc...) asparagine). N-linked (GlcNAc...) asparagine glycosylation occurs at N857. C881 and C893 are joined by a disulfide. 5 N-linked (GlcNAc...) asparagine glycosylation sites follow: N894, N973, N1031, N1039, and N1059. Residues 1142–1164 (IWIIVGSTLGGLLLLALLVLALW) traverse the membrane as a helical segment. Topologically, residues 1165 to 1188 (KLGFFRSARRRREPGLDPTPKVLE) are cytoplasmic.

Belongs to the integrin alpha chain family. As to quaternary structure, heterodimer of an alpha and a beta subunit. Alpha-11 associates with beta-1. Interacts with RAB21. In terms of tissue distribution, according to PubMed:10464311, highest levels of expression in uterus and heart, intermediate levels in skeletal muscle and intermediate to low levels in pancreas, kidney and placenta. According to PubMed:10486209, also found in brain, colon, lung, small intestine, stomach, testis, salivary glands, thyroid glands and prostate. Very low levels in peripheral blood lymphocytes, fetal brain and fetal liver.

The protein resides in the membrane. Integrin alpha-11/beta-1 is a receptor for collagen. The sequence is that of Integrin alpha-11 (ITGA11) from Homo sapiens (Human).